The chain runs to 205 residues: Histidine biosynthesis bifunctional protein HisIE (205 aa).

Residues Met-1–Val-116 are phosphoribosyl-AMP cyclohydrolase. Residues Leu-117–Lys-205 form a phosphoribosyl-ATP pyrophosphohydrolase region.

In the N-terminal section; belongs to the PRA-CH family. The protein in the C-terminal section; belongs to the PRA-PH family.

It is found in the cytoplasm. The catalysed reaction is 1-(5-phospho-beta-D-ribosyl)-ATP + H2O = 1-(5-phospho-beta-D-ribosyl)-5'-AMP + diphosphate + H(+). The enzyme catalyses 1-(5-phospho-beta-D-ribosyl)-5'-AMP + H2O = 1-(5-phospho-beta-D-ribosyl)-5-[(5-phospho-beta-D-ribosylamino)methylideneamino]imidazole-4-carboxamide. The protein operates within amino-acid biosynthesis; L-histidine biosynthesis; L-histidine from 5-phospho-alpha-D-ribose 1-diphosphate: step 2/9. It participates in amino-acid biosynthesis; L-histidine biosynthesis; L-histidine from 5-phospho-alpha-D-ribose 1-diphosphate: step 3/9. The polypeptide is Histidine biosynthesis bifunctional protein HisIE (hisI) (Aquifex aeolicus (strain VF5)).